The sequence spans 125 residues: Ribonuclease pancreatic (125 aa).

Residues lysine 7 and arginine 10 each contribute to the substrate site. Histidine 12 functions as the Proton acceptor in the catalytic mechanism. 4 disulfides stabilise this stretch: cysteine 27–cysteine 85, cysteine 41–cysteine 96, cysteine 59–cysteine 111, and cysteine 66–cysteine 73. N-linked (GlcNAc...) asparagine glycosylation occurs at asparagine 35. Substrate-binding positions include 42 to 46, lysine 67, and arginine 86; that span reads KPVNT. Catalysis depends on histidine 120, which acts as the Proton donor.

It belongs to the pancreatic ribonuclease family. Monomer. Interacts with and forms tight 1:1 complexes with RNH1. Dimerization of two such complexes may occur. Interaction with RNH1 inhibits this protein. Pancreas.

It is found in the secreted. It carries out the reaction an [RNA] containing cytidine + H2O = an [RNA]-3'-cytidine-3'-phosphate + a 5'-hydroxy-ribonucleotide-3'-[RNA].. It catalyses the reaction an [RNA] containing uridine + H2O = an [RNA]-3'-uridine-3'-phosphate + a 5'-hydroxy-ribonucleotide-3'-[RNA].. Functionally, endonuclease that catalyzes the cleavage of RNA on the 3' side of pyrimidine nucleotides. Acts on single-stranded and double-stranded RNA. The chain is Ribonuclease pancreatic (RNASE1) from Spalax ehrenbergi (Middle East blind mole rat).